The following is a 247-amino-acid chain: MLLIPAIDLKDGQCVRLKQGDMDQATVFSEDPAAMARHWVNQGARRLHLVDLNGAFVGKPRNEAAIKAIIAEVGDEIPVQLGGGIRDLNTIERWLDDGLSYVIIGTAAVKNPGFLKDACAAFGGHIIVGLDAKDGKVATDGWSKLTGHEVADLARKYEDYGVESIIYTDIGRDGMLQGINIDATVKLARSMSIPVIASGGLSNMADIDQLCAVEGEGVEGVICGRAIYSGDLNFAAAQAHADKLGAE.

Asp8 serves as the catalytic Proton acceptor. Asp131 functions as the Proton donor in the catalytic mechanism.

The protein belongs to the HisA/HisF family.

The protein localises to the cytoplasm. The catalysed reaction is 1-(5-phospho-beta-D-ribosyl)-5-[(5-phospho-beta-D-ribosylamino)methylideneamino]imidazole-4-carboxamide = 5-[(5-phospho-1-deoxy-D-ribulos-1-ylimino)methylamino]-1-(5-phospho-beta-D-ribosyl)imidazole-4-carboxamide. Its pathway is amino-acid biosynthesis; L-histidine biosynthesis; L-histidine from 5-phospho-alpha-D-ribose 1-diphosphate: step 4/9. The polypeptide is 1-(5-phosphoribosyl)-5-[(5-phosphoribosylamino)methylideneamino] imidazole-4-carboxamide isomerase (Cupriavidus metallidurans (strain ATCC 43123 / DSM 2839 / NBRC 102507 / CH34) (Ralstonia metallidurans)).